Here is a 205-residue protein sequence, read N- to C-terminus: Proteasome subunit beta (205 aa).

Residues methionine 1 to glycine 8 constitute a propeptide, removed in mature form; by autocatalysis. The active-site Nucleophile is threonine 9.

Belongs to the peptidase T1B family. The 20S proteasome core is composed of 14 alpha and 14 beta subunits that assemble into four stacked heptameric rings, resulting in a barrel-shaped structure. The two inner rings, each composed of seven catalytic beta subunits, are sandwiched by two outer rings, each composed of seven alpha subunits. The catalytic chamber with the active sites is on the inside of the barrel. Has a gated structure, the ends of the cylinder being occluded by the N-termini of the alpha-subunits. Is capped at one or both ends by the proteasome regulatory ATPase, PAN.

The protein localises to the cytoplasm. It carries out the reaction Cleavage of peptide bonds with very broad specificity.. Its activity is regulated as follows. The formation of the proteasomal ATPase PAN-20S proteasome complex, via the docking of the C-termini of PAN into the intersubunit pockets in the alpha-rings, triggers opening of the gate for substrate entry. Interconversion between the open-gate and close-gate conformations leads to a dynamic regulation of the 20S proteasome proteolysis activity. Its function is as follows. Component of the proteasome core, a large protease complex with broad specificity involved in protein degradation. This Methanocella paludicola (strain DSM 17711 / JCM 13418 / NBRC 101707 / SANAE) protein is Proteasome subunit beta.